The chain runs to 217 residues: Carbon disulfide hydrolase (217 aa).

Residues Cys39, His98, and Cys101 each contribute to the Zn(2+) site. A disordered region spans residues 192–217 (DKEKRARTDCTPTPYGVKGNQPPRWK).

This sequence belongs to the beta-class carbonic anhydrase family. Forms only homooctamers in solution. Requires Zn(2+) as cofactor.

It catalyses the reaction carbon disulfide + 2 H2O = 2 hydrogen sulfide + CO2 + 2 H(+). Its pathway is sulfur metabolism; hydrogen sulfide biosynthesis. Functionally, catalyzes the conversion of carbon disulfide into hydrogen sulfide and carbon dioxide, with carbonyl sulfide as an intermediate. Likely plays a key role in sulfur metabolism that allows A.thiooxidans S1p to grow on carbon disulfide as the main carbon and energy source. Does not show carbonic anhydrase activity (hydration of CO(2) to carbonate). The sequence is that of Carbon disulfide hydrolase from Acidithiobacillus thiooxidans (Thiobacillus thiooxidans).